Consider the following 454-residue polypeptide: Bifunctional protein GlmU (454 aa).

Residues 1-225 (MNIVILAAGM…VWETLGVNSK (225 aa)) are pyrophosphorylase. UDP-N-acetyl-alpha-D-glucosamine is bound by residues 6–9 (LAAG), K20, Q71, 76–77 (GT), 98–100 (YGD), G135, E150, N165, and N223. Residue D100 participates in Mg(2+) binding. N223 is a binding site for Mg(2+). The segment at 226 to 246 (LQLAEVERIHQGNQARRLLEA) is linker. The interval 247 to 454 (GVTLLDPARI…WQRPVKQPKQ (208 aa)) is N-acetyltransferase. Residues R329 and K347 each coordinate UDP-N-acetyl-alpha-D-glucosamine. The active-site Proton acceptor is the H359. Residues Y362 and N373 each contribute to the UDP-N-acetyl-alpha-D-glucosamine site. Residues A376, 382–383 (NY), S401, A419, and R436 each bind acetyl-CoA.

The protein in the N-terminal section; belongs to the N-acetylglucosamine-1-phosphate uridyltransferase family. This sequence in the C-terminal section; belongs to the transferase hexapeptide repeat family. As to quaternary structure, homotrimer. It depends on Mg(2+) as a cofactor.

The protein localises to the cytoplasm. It catalyses the reaction alpha-D-glucosamine 1-phosphate + acetyl-CoA = N-acetyl-alpha-D-glucosamine 1-phosphate + CoA + H(+). The catalysed reaction is N-acetyl-alpha-D-glucosamine 1-phosphate + UTP + H(+) = UDP-N-acetyl-alpha-D-glucosamine + diphosphate. Its pathway is nucleotide-sugar biosynthesis; UDP-N-acetyl-alpha-D-glucosamine biosynthesis; N-acetyl-alpha-D-glucosamine 1-phosphate from alpha-D-glucosamine 6-phosphate (route II): step 2/2. It participates in nucleotide-sugar biosynthesis; UDP-N-acetyl-alpha-D-glucosamine biosynthesis; UDP-N-acetyl-alpha-D-glucosamine from N-acetyl-alpha-D-glucosamine 1-phosphate: step 1/1. The protein operates within bacterial outer membrane biogenesis; LPS lipid A biosynthesis. Its function is as follows. Catalyzes the last two sequential reactions in the de novo biosynthetic pathway for UDP-N-acetylglucosamine (UDP-GlcNAc). The C-terminal domain catalyzes the transfer of acetyl group from acetyl coenzyme A to glucosamine-1-phosphate (GlcN-1-P) to produce N-acetylglucosamine-1-phosphate (GlcNAc-1-P), which is converted into UDP-GlcNAc by the transfer of uridine 5-monophosphate (from uridine 5-triphosphate), a reaction catalyzed by the N-terminal domain. In Cupriavidus taiwanensis (strain DSM 17343 / BCRC 17206 / CCUG 44338 / CIP 107171 / LMG 19424 / R1) (Ralstonia taiwanensis (strain LMG 19424)), this protein is Bifunctional protein GlmU.